We begin with the raw amino-acid sequence, 259 residues long: Phosphatidylserine decarboxylase proenzyme (259 aa).

The active-site Schiff-base intermediate with substrate; via pyruvic acid is the Ser183. Ser183 carries the post-translational modification Pyruvic acid (Ser); by autocatalysis.

It belongs to the phosphatidylserine decarboxylase family. PSD-A subfamily. As to quaternary structure, heterodimer of a large membrane-associated beta subunit and a small pyruvoyl-containing alpha subunit. It depends on pyruvate as a cofactor. In terms of processing, is synthesized initially as an inactive proenzyme. Formation of the active enzyme involves a self-maturation process in which the active site pyruvoyl group is generated from an internal serine residue via an autocatalytic post-translational modification. Two non-identical subunits are generated from the proenzyme in this reaction, and the pyruvate is formed at the N-terminus of the alpha chain, which is derived from the carboxyl end of the proenzyme. The post-translation cleavage follows an unusual pathway, termed non-hydrolytic serinolysis, in which the side chain hydroxyl group of the serine supplies its oxygen atom to form the C-terminus of the beta chain, while the remainder of the serine residue undergoes an oxidative deamination to produce ammonia and the pyruvoyl prosthetic group on the alpha chain.

Its subcellular location is the cell membrane. It catalyses the reaction a 1,2-diacyl-sn-glycero-3-phospho-L-serine + H(+) = a 1,2-diacyl-sn-glycero-3-phosphoethanolamine + CO2. Its pathway is phospholipid metabolism; phosphatidylethanolamine biosynthesis; phosphatidylethanolamine from CDP-diacylglycerol: step 2/2. Functionally, catalyzes the formation of phosphatidylethanolamine (PtdEtn) from phosphatidylserine (PtdSer). This chain is Phosphatidylserine decarboxylase proenzyme, found in Neisseria gonorrhoeae (strain ATCC 700825 / FA 1090).